The primary structure comprises 407 residues: Cation efflux system protein CusB (407 aa).

The N-terminal stretch at 1–28 is a signal peptide; it reads MKKIALIIGSMIAGGIISAAGFTWFAKA.

Belongs to the membrane fusion protein (MFP) (TC 8.A.1) family. As to quaternary structure, the cus efflux system is composed of CusA, CusB, CusC and CusF.

Functionally, part of a cation efflux system that mediates resistance to copper and silver. The sequence is that of Cation efflux system protein CusB (cusB) from Escherichia coli O157:H7.